The following is a 263-amino-acid chain: Thiamine thiazole synthase (263 aa).

Residues Ser36, 55–56, Gly63, Val127, and 157–159 each bind NAD(+); these read ER and HVD. Fe cation contacts are provided by Asp159 and His174. Met228 provides a ligand contact to NAD(+). Arg238 contributes to the glycine binding site.

The protein belongs to the THI4 family. In terms of assembly, homooctamer; tetramer of dimers. The cofactor is Fe(2+).

The catalysed reaction is hydrogen sulfide + glycine + NAD(+) = ADP-5-ethyl-4-methylthiazole-2-carboxylate + nicotinamide + 3 H2O + H(+). The protein operates within cofactor biosynthesis; thiamine diphosphate biosynthesis. Its function is as follows. Involved in the biosynthesis of the thiazole moiety of thiamine. Catalyzes the conversion of NAD and glycine to adenosine diphosphate 5-(2-hydroxyethyl)-4-methylthiazole-2-carboxylate (ADT), an adenylated thiazole intermediate, using free sulfide as a source of sulfur. This is Thiamine thiazole synthase from Solidesulfovibrio magneticus (strain ATCC 700980 / DSM 13731 / RS-1) (Desulfovibrio magneticus).